The primary structure comprises 565 residues: Arginine--tRNA ligase (565 aa).

Residues 128–138 carry the 'HIGH' region motif; that stretch reads ANPTGPLHVGH.

The protein belongs to the class-I aminoacyl-tRNA synthetase family. As to quaternary structure, monomer.

Its subcellular location is the cytoplasm. The enzyme catalyses tRNA(Arg) + L-arginine + ATP = L-arginyl-tRNA(Arg) + AMP + diphosphate. This Delftia acidovorans (strain DSM 14801 / SPH-1) protein is Arginine--tRNA ligase.